A 314-amino-acid chain; its full sequence is Probable cell division protein WhiA (314 aa).

Positions 274 to 308 (SLKELGEMISTGPISKSGVNHRLRKLNELADKIRS) form a DNA-binding region, H-T-H motif.

The protein belongs to the WhiA family.

In terms of biological role, involved in cell division and chromosome segregation. This Staphylococcus haemolyticus (strain JCSC1435) protein is Probable cell division protein WhiA.